A 211-amino-acid chain; its full sequence is Glycerol-3-phosphate acyltransferase (211 aa).

5 consecutive transmembrane segments (helical) span residues 10–30 (FTTW…FGLL), 63–83 (ALTL…IKFL), 90–110 (NIFI…PVWL), 126–146 (LGLY…LFLI), and 152–172 (LSAL…YPYL).

It belongs to the PlsY family. As to quaternary structure, probably interacts with PlsX.

The protein resides in the cell inner membrane. It carries out the reaction an acyl phosphate + sn-glycerol 3-phosphate = a 1-acyl-sn-glycero-3-phosphate + phosphate. It functions in the pathway lipid metabolism; phospholipid metabolism. In terms of biological role, catalyzes the transfer of an acyl group from acyl-phosphate (acyl-PO(4)) to glycerol-3-phosphate (G3P) to form lysophosphatidic acid (LPA). This enzyme utilizes acyl-phosphate as fatty acyl donor, but not acyl-CoA or acyl-ACP. The polypeptide is Glycerol-3-phosphate acyltransferase (Bartonella henselae (strain ATCC 49882 / DSM 28221 / CCUG 30454 / Houston 1) (Rochalimaea henselae)).